The following is a 285-amino-acid chain: uncharacterized protein (285 aa).

Disordered stretches follow at residues 115–139 and 152–183; these read AAGKASVQARRSRKEADVQTKQERN and EHDVNTKATNKDTDKDLKTDPPLNPPRGNRGV. 2 stretches are compositionally biased toward basic and acidic residues: residues 128–138 and 152–170; these read KEADVQTKQER and EHDVNTKATNKDTDKDLKT.

This is an uncharacterized protein from Escherichia coli (strain K12).